The following is a 624-amino-acid chain: Protein POLLEN DEFECTIVE IN GUIDANCE 1 (624 aa).

The tract at residues 20–63 (SFENDDTSIRRSSSDPITGNVASESPRDYGKRKRSKKKKKKVNQ) is disordered. A compositionally biased stretch (polar residues) spans 33 to 42 (SDPITGNVAS). A compositionally biased stretch (basic residues) spans 49–61 (GKRKRSKKKKKKV). A run of 6 helical transmembrane segments spans residues 263–283 (VLIDTGFFVCVNSFLSLLTVM), 305–325 (ASELSDLACFLVLATGTILLG), 391–411 (FVSDLALTMAASILHSFILLA), 413–433 (AITLSTCIVAHNNALLALLVS), 545–565 (LTFVPLAPACVVIRVLTPVYA), and 578–598 (LWMVILFVITYIMLTSLKVLI).

It belongs to the TAPT1 family. In terms of assembly, interacts with CRT3, but not with CRT1 or CNX. In terms of tissue distribution, expressed in inflorescences, siliques, roots and shoots. Expressed in early embryo, endosperm, mature pollen and pollen tubes, synergide cells and weakly in antipodal cells.

It localises to the membrane. Its subcellular location is the endoplasmic reticulum lumen. Its function is as follows. Probable component of the calreticulin 3 (CRT3) complex, acting probably as a co-chaperone involved in protein retention in the endoplasmic reticulum lumen. Required for micropylar pollen tube guidance. Plays an essential role in cell plate orientation or positioning in early embryo patterning. The protein is Protein POLLEN DEFECTIVE IN GUIDANCE 1 (POD1) of Arabidopsis thaliana (Mouse-ear cress).